A 351-amino-acid polypeptide reads, in one-letter code: MAIKVLVVDDSTLIRSLLGKMIESDPELSLVGMAADAYMAKDMVNQFRPDVITLDIEMPKVDGLTFLDRLMKARPTAVVMISALTEEGADATFNALALGAVDFIPKPKLDSPQGFNEYQDLILEKIKSAAKAKLLKALPSASTPVKSSIKPALSQRTVNTQLVAIGASTGGTEAILALLKQFPAVMPPIVITQHMPAGFTCTFADRLNKLTRFNVKQAEEGERLLPCYAYVAPGDQHLEIIKVGGSFKAKLSQGDKVSGHRPSVDVLFHSVAQYAGENATAVILTGMGKDGADGIEAIDMQGGKTFAQGEQSCVVFGMPKEAIKRGAIHHVVELPQLGDKLLQYLASVNRD.

Residues 4–121 form the Response regulatory domain; sequence KVLVVDDSTL…PQGFNEYQDL (118 aa). A 4-aspartylphosphate modification is found at aspartate 55. Positions 156 to 348 constitute a CheB-type methylesterase domain; that stretch reads RTVNTQLVAI…DKLLQYLASV (193 aa). Active-site residues include serine 168, histidine 194, and aspartate 290.

It belongs to the CheB family. In terms of processing, phosphorylated by CheA. Phosphorylation of the N-terminal regulatory domain activates the methylesterase activity.

It is found in the cytoplasm. It catalyses the reaction [protein]-L-glutamate 5-O-methyl ester + H2O = L-glutamyl-[protein] + methanol + H(+). The catalysed reaction is L-glutaminyl-[protein] + H2O = L-glutamyl-[protein] + NH4(+). Its function is as follows. Involved in chemotaxis. Part of a chemotaxis signal transduction system that modulates chemotaxis in response to various stimuli. Catalyzes the demethylation of specific methylglutamate residues introduced into the chemoreceptors (methyl-accepting chemotaxis proteins or MCP) by CheR. Also mediates the irreversible deamidation of specific glutamine residues to glutamic acid. This is Protein-glutamate methylesterase/protein-glutamine glutaminase 2 from Shewanella oneidensis (strain ATCC 700550 / JCM 31522 / CIP 106686 / LMG 19005 / NCIMB 14063 / MR-1).